The chain runs to 412 residues: Short-chain specific acyl-CoA dehydrogenase, mitochondrial (412 aa).

The N-terminal 24 residues, 1–24 (MAAALLARARGPLRRALGVRDWRR), are a transit peptide targeting the mitochondrion. Residue T27 is modified to Phosphothreonine. An N6-acetyllysine; alternate modification is found at K51. At K51 the chain carries N6-succinyllysine; alternate. K72 bears the N6-acetyllysine mark. K129 carries the N6-acetyllysine; alternate modification. K129 bears the N6-succinyllysine; alternate mark. Residues 152–161 (FALSEPGNGS) and 185–187 (WIT) contribute to the FAD site. Substrate is bound at residue S161. N6-acetyllysine is present on K208. K262 is modified (N6-acetyllysine; alternate). K262 carries the N6-succinyllysine; alternate modification. 269–272 (DMGR) serves as a coordination point for substrate. The residue at position 292 (K292) is an N6-acetyllysine. R297 contributes to the FAD binding site. Residue K306 is modified to N6-acetyllysine; alternate. Residue K306 is modified to N6-succinyllysine; alternate. FAD is bound by residues Q308 and 365–369 (QILGG). The active-site Proton acceptor is the E392. A substrate-binding site is contributed by G393. Position 394–396 (394–396 (TSE)) interacts with FAD.

The protein belongs to the acyl-CoA dehydrogenase family. In terms of assembly, homotetramer. It depends on FAD as a cofactor.

It localises to the mitochondrion matrix. It carries out the reaction a short-chain 2,3-saturated fatty acyl-CoA + oxidized [electron-transfer flavoprotein] + H(+) = a short-chain (2E)-enoyl-CoA + reduced [electron-transfer flavoprotein]. The enzyme catalyses butanoyl-CoA + oxidized [electron-transfer flavoprotein] + H(+) = (2E)-butenoyl-CoA + reduced [electron-transfer flavoprotein]. The catalysed reaction is pentanoyl-CoA + oxidized [electron-transfer flavoprotein] + H(+) = (2E)-pentenoyl-CoA + reduced [electron-transfer flavoprotein]. It catalyses the reaction hexanoyl-CoA + oxidized [electron-transfer flavoprotein] + H(+) = (2E)-hexenoyl-CoA + reduced [electron-transfer flavoprotein]. The protein operates within lipid metabolism; mitochondrial fatty acid beta-oxidation. In terms of biological role, short-chain specific acyl-CoA dehydrogenase is one of the acyl-CoA dehydrogenases that catalyze the first step of mitochondrial fatty acid beta-oxidation, an aerobic process breaking down fatty acids into acetyl-CoA and allowing the production of energy from fats. The first step of fatty acid beta-oxidation consists in the removal of one hydrogen from C-2 and C-3 of the straight-chain fatty acyl-CoA thioester, resulting in the formation of trans-2-enoyl-CoA. Among the different mitochondrial acyl-CoA dehydrogenases, short-chain specific acyl-CoA dehydrogenase acts specifically on acyl-CoAs with saturated 4 to 6 carbons long primary chains. This chain is Short-chain specific acyl-CoA dehydrogenase, mitochondrial (Acads), found in Mus musculus (Mouse).